Consider the following 279-residue polypeptide: Sulfur carrier protein FdhD (279 aa).

Cysteine 122 serves as the catalytic Cysteine persulfide intermediate.

Belongs to the FdhD family.

The protein localises to the cytoplasm. Required for formate dehydrogenase (FDH) activity. Acts as a sulfur carrier protein that transfers sulfur from IscS to the molybdenum cofactor prior to its insertion into FDH. The protein is Sulfur carrier protein FdhD of Thermoplasma volcanium (strain ATCC 51530 / DSM 4299 / JCM 9571 / NBRC 15438 / GSS1).